The primary structure comprises 9518 residues: Nonribosomal peptide synthetase ungA' (9518 aa).

An adenylation 1 region spans residues 214–611 (ERARETPNAP…ARKDDQVKVR (398 aa)). In terms of domain architecture, Carrier 1 spans 738 to 814 (APRTEMEWRL…DLAEVARLEQ (77 aa)). Residue serine 775 is modified to O-(pantetheine 4'-phosphoryl)serine. The condensation 1 stretch occupies residues 853-1250 (DLLPCSPLQE…EEVLRQISRE (398 aa)). The adenylation 2 stretch occupies residues 1292-1695 (QRVQEQPDRP…GRKDTQVKIR (404 aa)). One can recognise a Carrier 2 domain in the interval 1822-1898 (LPQTELERRL…RLAHCSQTEQ (77 aa)). O-(pantetheine 4'-phosphoryl)serine is present on serine 1859. The tract at residues 1911–2336 (TFALSPIQQL…QRSLEVVAKE (426 aa)) is epimerization 1. A condensation 2 region spans residues 2376-2803 (EDIYPCSPVQ…DNLQIASSQD (428 aa)). Residues 2829–3224 (RIQQQPEAPA…NRKDNQVKIR (396 aa)) are adenylation 3. The 77-residue stretch at 3352-3428 (APATASEQRL…DMAQTLKVES (77 aa)) folds into the Carrier 3 domain. Serine 3389 is subject to O-(pantetheine 4'-phosphoryl)serine. The segment at 3465-3869 (EDVLPCTPLQ…QVCKEASQYL (405 aa)) is condensation 3. The segment at 3906–4307 (QQAHQRPNAS…GRRDAQVKIR (402 aa)) is adenylation 4. In terms of domain architecture, Carrier 4 spans 4436–4512 (TPTTITECRI…RLAACTTPVD (77 aa)). Serine 4473 bears the O-(pantetheine 4'-phosphoryl)serine mark. The interval 4527–4954 (ALSPIQQLFV…EDAAQELPSL (428 aa)) is epimerization 2. Positions 4990 to 5411 (VEDIYPCSPI…ANLISKEDLR (422 aa)) are condensation 4. The tract at residues 5433–5829 (SEQAQNQPDA…GRKDGQVKIR (397 aa)) is adenylation 5. Positions 5957 to 6033 (VASSPVELAL…QLAKNSGLQA (77 aa)) constitute a Carrier 5 domain. Serine 5994 bears the O-(pantetheine 4'-phosphoryl)serine mark. Positions 6050–6470 (ELSPIQRMFF…CEHSLVMAAH (421 aa)) are epimerization 3. Residues 6512 to 6856 (VEDIYPCTPI…TGISVQNNAS (345 aa)) are condensation 5. The segment at 6947–7338 (LRPNSSAIHA…GRKDSQVKVR (392 aa)) is adenylation 6. Residues 7464 to 7540 (LPRTEVEMQL…GLAPSAASQA (77 aa)) enclose the Carrier 6 domain. At serine 7501 the chain carries O-(pantetheine 4'-phosphoryl)serine. The segment at 7555-7978 (ELSPIQQMFI…LQTAARELPH (424 aa)) is epimerization 4. The segment at 8016–8444 (VEDIYPLTPI…QVDLAGRHDQ (429 aa)) is condensation 6. Residues 8468–8867 (MQCQQRPDAT…SRKDAQVKIR (400 aa)) are adenylation 7. In terms of domain architecture, Carrier 7 spans 8995-9071 (PLTTEMEWRL…DMAHYLREGQ (77 aa)). Serine 9032 is subject to O-(pantetheine 4'-phosphoryl)serine. A condensation 7 region spans residues 9111–9454 (DVYPTTELQD…DNLEHDAGTS (344 aa)).

The protein belongs to the NRP synthetase family.

It participates in secondary metabolite biosynthesis. Functionally, nonribosomal peptide synthetase; part of the gene cluster that mediates the biosynthesis of the unguisins, gamma-aminobutyric acid (GABA)-containing fungal cyclic heptapeptides with the amino acid sequence cyclo-(D-Ala1-D-Val2-L-Leu3-beta-MePhe4-D-Ala5-D-Trp6-GABA7) for unguisin H and cyclo-(D-Ala1-D-Ala2-L-Leu3-beta-MePhe4-D-Ala5-D-Trp6-GABA7) for unguisin I. UngA' is the main enzyme within the cluster which condenses the 7 residues using its respective 7 modules. The terminal condensation domain (Ct) is involved in cyclization with D-alanine and thereby releasing of unguisins H and I. The alanine racemase ungC' provides D-alanine, which is then accepted by the first adenylation domain of ungA', whereas the methyltransferase ungE' provides the (2R,3R)-beta-methylphenylalanine residue incorporated by the module 4. Finally, the hydrolase ungD' catalyzes the hydrolysis between the D-tryptophan and GABA residues of unguisins H and I to produce the corresponding linear peptides. The polypeptide is Nonribosomal peptide synthetase ungA' (Aspergillus campestris (strain IBT 28561)).